The chain runs to 81 residues: Alpha-toxin Ac1 (81 aa).

Residues 1-17 (YIVMISLALVVMIGVES) form the signal peptide. Residues 19–80 (RDGYIVYPNN…PIKDPSQKCT (62 aa)) form the LCN-type CS-alpha/beta domain. Intrachain disulfides connect Cys-29–Cys-79, Cys-33–Cys-51, Cys-37–Cys-61, and Cys-41–Cys-63.

Belongs to the long (4 C-C) scorpion toxin superfamily. Sodium channel inhibitor family. Alpha subfamily. In terms of tissue distribution, expressed by the venom gland.

It is found in the secreted. In terms of biological role, alpha toxins bind voltage-independently at site-3 of sodium channels (Nav) and inhibit the inactivation of the activated channels, thereby blocking neuronal transmission. The polypeptide is Alpha-toxin Ac1 (Androctonus crassicauda (Arabian fat-tailed scorpion)).